The following is a 121-amino-acid chain: UPF0102 protein DSY2577 (121 aa).

This sequence belongs to the UPF0102 family.

This is UPF0102 protein DSY2577 from Desulfitobacterium hafniense (strain Y51).